Reading from the N-terminus, the 820-residue chain is Leucine--tRNA ligase (820 aa).

Residues 40 to 51 (PYPSGAGLHVGH) carry the 'HIGH' region motif. The 'KMSKS' region motif lies at 601–605 (KMSKS). Lysine 604 serves as a coordination point for ATP.

It belongs to the class-I aminoacyl-tRNA synthetase family.

The protein localises to the cytoplasm. It carries out the reaction tRNA(Leu) + L-leucine + ATP = L-leucyl-tRNA(Leu) + AMP + diphosphate. The sequence is that of Leucine--tRNA ligase from Chlamydia pneumoniae (Chlamydophila pneumoniae).